The following is a 493-amino-acid chain: Hexokinase (493 aa).

The region spanning 27–481 is the Hexokinase domain; sequence EELSWRINKF…SGKGAAITAA (455 aa). Residues 91 to 239 are hexokinase small subdomain; that stretch reads TGQEKGTYYA…AIPAKVCCVL (149 aa). An ATP-binding site is contributed by 102–107; sequence DFGGTN. A glucose-binding region spans residues 177–203; the sequence is SVGFTFSFPCTSPSINCSILIDWTKGF. Residues 240–470 form a hexokinase large subdomain region; the sequence is NDAVGTLMSC…ENLIIIPADD (231 aa).

This sequence belongs to the hexokinase family.

The catalysed reaction is a D-hexose + ATP = a D-hexose 6-phosphate + ADP + H(+). The enzyme catalyses D-mannose + ATP = D-mannose 6-phosphate + ADP + H(+). It catalyses the reaction D-fructose + ATP = D-fructose 6-phosphate + ADP + H(+). It carries out the reaction D-glucose + ATP = D-glucose 6-phosphate + ADP + H(+). The protein operates within carbohydrate metabolism; hexose metabolism. Its pathway is carbohydrate degradation; glycolysis; D-glyceraldehyde 3-phosphate and glycerone phosphate from D-glucose: step 1/4. Catalyzes the phosphorylation of various hexoses to hexose 6-phosphate. The polypeptide is Hexokinase (HK) (Plasmodium falciparum).